We begin with the raw amino-acid sequence, 330 residues long: Deoxyhypusine hydroxylase (330 aa).

HEAT-like PBS-type repeat units follow at residues 57–83, 90–116, and 199–225; these read LKHELAYCLGQIRNPLALPVLESVLRN, VRHEAAEAMGAISTADSIPILKQYLSD, and ERYRAMFALRNIGSPAAVDALAAGFSG. 4 residues coordinate Fe cation: His-59, Glu-60, His-92, and Glu-93. Fe cation-binding residues include His-232, Glu-233, His-265, and Glu-266. One copy of the HEAT-like PBS-type 4 repeat lies at 263–289; sequence VRHEAAEALGGIATPEVLPPLKEWVAR.

It belongs to the deoxyhypusine hydroxylase family. Fe(2+) serves as cofactor.

It localises to the cytoplasm. It is found in the nucleus. The catalysed reaction is [eIF5A protein]-deoxyhypusine + AH2 + O2 = [eIF5A protein]-hypusine + A + H2O. It functions in the pathway protein modification; eIF5A hypusination. Catalyzes the hydroxylation of the N(6)-(4-aminobutyl)-L-lysine intermediate to form hypusine, an essential post-translational modification only found in mature eIF-5A factor. The chain is Deoxyhypusine hydroxylase from Lentinula edodes (Shiitake mushroom).